The following is an 87-amino-acid chain: Putative regulatory protein CHY_1489 (87 aa).

Belongs to the RemA family.

The polypeptide is Putative regulatory protein CHY_1489 (Carboxydothermus hydrogenoformans (strain ATCC BAA-161 / DSM 6008 / Z-2901)).